Here is a 207-residue protein sequence, read N- to C-terminus: Uracil phosphoribosyltransferase (207 aa).

5-phospho-alpha-D-ribose 1-diphosphate is bound by residues Arg-77, Arg-102, and 129 to 137; that span reads DPMLATGGS. Uracil-binding positions include Ile-192 and 197–199; that span reads GDA. Asp-198 is a binding site for 5-phospho-alpha-D-ribose 1-diphosphate.

Belongs to the UPRTase family. It depends on Mg(2+) as a cofactor.

It catalyses the reaction UMP + diphosphate = 5-phospho-alpha-D-ribose 1-diphosphate + uracil. The protein operates within pyrimidine metabolism; UMP biosynthesis via salvage pathway; UMP from uracil: step 1/1. With respect to regulation, allosterically activated by GTP. Catalyzes the conversion of uracil and 5-phospho-alpha-D-ribose 1-diphosphate (PRPP) to UMP and diphosphate. This Mycoplasma mycoides subsp. mycoides SC (strain CCUG 32753 / NCTC 10114 / PG1) protein is Uracil phosphoribosyltransferase.